The primary structure comprises 330 residues: Ketol-acid reductoisomerase (NADP(+)) (330 aa).

In terms of domain architecture, KARI N-terminal Rossmann spans 1–181; sequence MKVFYDSDFK…GLSRAGVIQT (181 aa). NADP(+)-binding positions include 24 to 27, arginine 47, serine 52, and 82 to 85; these read YGSQ and DELQ. The active site involves histidine 107. Glycine 133 contacts NADP(+). Residues 182–327 enclose the KARI C-terminal knotted domain; the sequence is TFKEETETDL…AKLRKMCGLE (146 aa). Mg(2+) contacts are provided by aspartate 190, glutamate 194, glutamate 226, and glutamate 230. Serine 251 contributes to the substrate binding site.

Belongs to the ketol-acid reductoisomerase family. Requires Mg(2+) as cofactor.

It catalyses the reaction (2R)-2,3-dihydroxy-3-methylbutanoate + NADP(+) = (2S)-2-acetolactate + NADPH + H(+). The catalysed reaction is (2R,3R)-2,3-dihydroxy-3-methylpentanoate + NADP(+) = (S)-2-ethyl-2-hydroxy-3-oxobutanoate + NADPH + H(+). The protein operates within amino-acid biosynthesis; L-isoleucine biosynthesis; L-isoleucine from 2-oxobutanoate: step 2/4. Its pathway is amino-acid biosynthesis; L-valine biosynthesis; L-valine from pyruvate: step 2/4. Its function is as follows. Involved in the biosynthesis of branched-chain amino acids (BCAA). Catalyzes an alkyl-migration followed by a ketol-acid reduction of (S)-2-acetolactate (S2AL) to yield (R)-2,3-dihydroxy-isovalerate. In the isomerase reaction, S2AL is rearranged via a Mg-dependent methyl migration to produce 3-hydroxy-3-methyl-2-ketobutyrate (HMKB). In the reductase reaction, this 2-ketoacid undergoes a metal-dependent reduction by NADPH to yield (R)-2,3-dihydroxy-isovalerate. The polypeptide is Ketol-acid reductoisomerase (NADP(+)) (Methanococcus maripaludis (strain C5 / ATCC BAA-1333)).